The primary structure comprises 71 residues: Small ribosomal subunit protein bS18 (71 aa).

This sequence belongs to the bacterial ribosomal protein bS18 family. As to quaternary structure, part of the 30S ribosomal subunit. Forms a tight heterodimer with protein bS6.

In terms of biological role, binds as a heterodimer with protein bS6 to the central domain of the 16S rRNA, where it helps stabilize the platform of the 30S subunit. This chain is Small ribosomal subunit protein bS18, found in Nostoc punctiforme (strain ATCC 29133 / PCC 73102).